The chain runs to 165 residues: Probable cell wall protein PGA15 (165 aa).

The N-terminal stretch at 1–16 (MKFIIILFTLISIVTA) is a signal peptide. Residue Ser143 is the site of GPI-anchor amidated serine attachment. Positions 144–165 (GAANYLTSFSIGTFFVFVLGLI) are cleaved as a propeptide — removed in mature form.

This sequence belongs to the IHD1 family. The GPI-anchor is attached to the protein in the endoplasmic reticulum and serves to target the protein to the cell surface. There, the glucosamine-inositol phospholipid moiety is cleaved off and the GPI-modified mannoprotein is covalently attached via its lipidless GPI glycan remnant to the 1,6-beta-glucan of the outer cell wall layer.

The protein localises to the secreted. The protein resides in the cell wall. It localises to the membrane. Functionally, probable GPI-anchored cell wall protein that may be involved in cell wall organization, hyphal growth, as well as in virulence. The chain is Probable cell wall protein PGA15 (PGA15) from Candida albicans (strain SC5314 / ATCC MYA-2876) (Yeast).